The sequence spans 160 residues: Probable transcriptional regulator YgiV (160 aa).

In terms of biological role, represses expression of mcbR. This chain is Probable transcriptional regulator YgiV (ygiV), found in Escherichia coli (strain K12).